A 358-amino-acid polypeptide reads, in one-letter code: Sulfate/thiosulfate import ATP-binding protein CysA (358 aa).

The ABC transporter domain occupies 3–237; it reads IKIENLEKHF…PQTPFVTQFV (235 aa). 35-42 contacts ATP; that stretch reads GPSGCGKT.

It belongs to the ABC transporter superfamily. Sulfate/tungstate importer (TC 3.A.1.6) family. The complex is composed of two ATP-binding proteins (CysA), two transmembrane proteins (CysT and CysW) and a solute-binding protein (CysP).

The protein resides in the cell inner membrane. It catalyses the reaction sulfate(out) + ATP + H2O = sulfate(in) + ADP + phosphate + H(+). The catalysed reaction is thiosulfate(out) + ATP + H2O = thiosulfate(in) + ADP + phosphate + H(+). Functionally, part of the ABC transporter complex CysAWTP involved in sulfate/thiosulfate import. Responsible for energy coupling to the transport system. This Mannheimia succiniciproducens (strain KCTC 0769BP / MBEL55E) protein is Sulfate/thiosulfate import ATP-binding protein CysA.